Here is a 114-residue protein sequence, read N- to C-terminus: Large ribosomal subunit protein uL22 (114 aa).

The protein belongs to the universal ribosomal protein uL22 family. As to quaternary structure, part of the 50S ribosomal subunit.

Functionally, this protein binds specifically to 23S rRNA; its binding is stimulated by other ribosomal proteins, e.g. L4, L17, and L20. It is important during the early stages of 50S assembly. It makes multiple contacts with different domains of the 23S rRNA in the assembled 50S subunit and ribosome. In terms of biological role, the globular domain of the protein is located near the polypeptide exit tunnel on the outside of the subunit, while an extended beta-hairpin is found that lines the wall of the exit tunnel in the center of the 70S ribosome. This chain is Large ribosomal subunit protein uL22, found in Aeromonas hydrophila subsp. hydrophila (strain ATCC 7966 / DSM 30187 / BCRC 13018 / CCUG 14551 / JCM 1027 / KCTC 2358 / NCIMB 9240 / NCTC 8049).